A 336-amino-acid polypeptide reads, in one-letter code: Tetraacyldisaccharide 4'-kinase (336 aa).

58–65 (AVGGSGKT) serves as a coordination point for ATP.

The protein belongs to the LpxK family.

It catalyses the reaction a lipid A disaccharide + ATP = a lipid IVA + ADP + H(+). It functions in the pathway glycolipid biosynthesis; lipid IV(A) biosynthesis; lipid IV(A) from (3R)-3-hydroxytetradecanoyl-[acyl-carrier-protein] and UDP-N-acetyl-alpha-D-glucosamine: step 6/6. In terms of biological role, transfers the gamma-phosphate of ATP to the 4'-position of a tetraacyldisaccharide 1-phosphate intermediate (termed DS-1-P) to form tetraacyldisaccharide 1,4'-bis-phosphate (lipid IVA). The polypeptide is Tetraacyldisaccharide 4'-kinase (Aromatoleum aromaticum (strain DSM 19018 / LMG 30748 / EbN1) (Azoarcus sp. (strain EbN1))).